Consider the following 942-residue polypeptide: Serine/threonine-protein kinase ATG1 (942 aa).

The region spanning 11 to 312 is the Protein kinase domain; sequence YVVEKEIGKG…FEEFFNNKIV (302 aa). ATP-binding positions include 17 to 25 and lysine 41; that span reads IGKGSFATV. Aspartate 159 (proton acceptor) is an active-site residue. Polar residues predominate over residues 435-452; the sequence is NSSRVNKLDKSNLSGKSD. 3 disordered regions span residues 435-454, 505-529, and 817-836; these read NSSR…SDSS, QPHN…SRRA, and NSKP…NDSN. Positions 515 to 529 are enriched in low complexity; it reads RAPSTTSGGTSSRRA. Residues 819 to 834 show a composition bias toward polar residues; the sequence is KPGTHNQSPKSKISND.

This sequence belongs to the protein kinase superfamily. Ser/Thr protein kinase family. APG1/unc-51/ULK1 subfamily. Homodimer. Forms a ternary complex with ATG13 and ATG17.

The protein localises to the cytoplasm. The protein resides in the preautophagosomal structure membrane. The enzyme catalyses L-seryl-[protein] + ATP = O-phospho-L-seryl-[protein] + ADP + H(+). It carries out the reaction L-threonyl-[protein] + ATP = O-phospho-L-threonyl-[protein] + ADP + H(+). Serine/threonine protein kinase involved in the cytoplasm to vacuole transport (Cvt) and found to be essential in autophagy, where it is required for the formation of autophagosomes. Involved in the clearance of protein aggregates which cannot be efficiently cleared by the proteasome. Required for selective autophagic degradation of the nucleus (nucleophagy) as well as for mitophagy which contributes to regulate mitochondrial quantity and quality by eliminating the mitochondria to a basal level to fulfill cellular energy requirements and preventing excess ROS production. Also involved in endoplasmic reticulum-specific autophagic process, in selective removal of ER-associated degradation (ERAD) substrates. Plays a key role in ATG9 and ATG23 cycling through the pre-autophagosomal structure and is necessary to promote ATG18 binding to ATG9 through phosphorylation of ATG9. Catalyzes phosphorylation of ATG4, decreasing the interaction between ATG4 and ATG8 and impairing deconjugation of PE-conjugated forms of ATG8. Contributes to virulence by conferring resistance to unstable nutrient environments and immune defense of hosts. The polypeptide is Serine/threonine-protein kinase ATG1 (Candida glabrata (strain ATCC 2001 / BCRC 20586 / JCM 3761 / NBRC 0622 / NRRL Y-65 / CBS 138) (Yeast)).